Reading from the N-terminus, the 213-residue chain is Large ribosomal subunit protein uL3 (213 aa).

The tract at residues 124 to 151 (KRHGQSRGPMAHGSRYHRRPGSMGSIAP) is disordered.

Belongs to the universal ribosomal protein uL3 family. In terms of assembly, part of the 50S ribosomal subunit. Forms a cluster with proteins L14 and L19.

Functionally, one of the primary rRNA binding proteins, it binds directly near the 3'-end of the 23S rRNA, where it nucleates assembly of the 50S subunit. This Geobacillus kaustophilus (strain HTA426) protein is Large ribosomal subunit protein uL3.